Here is a 137-residue protein sequence, read N- to C-terminus: MKLKVKIAIPGKVVWENEVDEVNIQTTTGKIGILPNHAPIIATVETSVLRMKSDESQNPILMVISDGYLSLEKNSIFIATDRCILEDNINASKLEEDYKTALERYNNAEKPGKKYIANKALKRINACYEILSYRNND.

Belongs to the ATPase epsilon chain family. As to quaternary structure, F-type ATPases have 2 components, CF(1) - the catalytic core - and CF(0) - the membrane proton channel. CF(1) has five subunits: alpha(3), beta(3), gamma(1), delta(1), epsilon(1). CF(0) has three main subunits: a, b and c.

The protein resides in the plastid. It is found in the chloroplast thylakoid membrane. Its function is as follows. Produces ATP from ADP in the presence of a proton gradient across the membrane. This Bigelowiella natans (Pedinomonas minutissima) protein is ATP synthase epsilon chain, chloroplastic.